The primary structure comprises 220 residues: Uracil-DNA glycosylase (220 aa).

The Proton acceptor role is filled by Asp60.

It belongs to the uracil-DNA glycosylase (UDG) superfamily. UNG family.

It is found in the cytoplasm. The enzyme catalyses Hydrolyzes single-stranded DNA or mismatched double-stranded DNA and polynucleotides, releasing free uracil.. Excises uracil residues from the DNA which can arise as a result of misincorporation of dUMP residues by DNA polymerase or due to deamination of cytosine. In Francisella tularensis subsp. tularensis (strain FSC 198), this protein is Uracil-DNA glycosylase.